A 284-amino-acid polypeptide reads, in one-letter code: 2-dehydro-3-deoxyphosphooctonate aldolase (284 aa).

This sequence belongs to the KdsA family.

It is found in the cytoplasm. It carries out the reaction D-arabinose 5-phosphate + phosphoenolpyruvate + H2O = 3-deoxy-alpha-D-manno-2-octulosonate-8-phosphate + phosphate. It functions in the pathway carbohydrate biosynthesis; 3-deoxy-D-manno-octulosonate biosynthesis; 3-deoxy-D-manno-octulosonate from D-ribulose 5-phosphate: step 2/3. The protein operates within bacterial outer membrane biogenesis; lipopolysaccharide biosynthesis. The protein is 2-dehydro-3-deoxyphosphooctonate aldolase of Burkholderia cenocepacia (strain ATCC BAA-245 / DSM 16553 / LMG 16656 / NCTC 13227 / J2315 / CF5610) (Burkholderia cepacia (strain J2315)).